The chain runs to 338 residues: DNA-directed RNA polymerase subunit alpha (338 aa).

Positions 1–226 (MLIAQRPSLT…ELFGLARELN (226 aa)) are alpha N-terminal domain (alpha-NTD). Residues 243 to 338 (LAADLVMPIE…DAGFLETEHY (96 aa)) form an alpha C-terminal domain (alpha-CTD) region.

It belongs to the RNA polymerase alpha chain family. Homodimer. The RNAP catalytic core consists of 2 alpha, 1 beta, 1 beta' and 1 omega subunit. When a sigma factor is associated with the core the holoenzyme is formed, which can initiate transcription.

It catalyses the reaction RNA(n) + a ribonucleoside 5'-triphosphate = RNA(n+1) + diphosphate. In terms of biological role, DNA-dependent RNA polymerase catalyzes the transcription of DNA into RNA using the four ribonucleoside triphosphates as substrates. In Streptomyces avermitilis (strain ATCC 31267 / DSM 46492 / JCM 5070 / NBRC 14893 / NCIMB 12804 / NRRL 8165 / MA-4680), this protein is DNA-directed RNA polymerase subunit alpha.